The primary structure comprises 337 residues: Pyridoxal 5'-phosphate synthase subunit PdxS (337 aa).

A D-ribose 5-phosphate-binding site is contributed by aspartate 65. Lysine 122 (schiff-base intermediate with D-ribose 5-phosphate) is an active-site residue. Glycine 194 serves as a coordination point for D-ribose 5-phosphate. Lysine 206 contacts D-glyceraldehyde 3-phosphate. Residues glycine 255 and 276–277 (GS) each bind D-ribose 5-phosphate.

The protein belongs to the PdxS/SNZ family. As to quaternary structure, in the presence of PdxT, forms a dodecamer of heterodimers.

It catalyses the reaction aldehydo-D-ribose 5-phosphate + D-glyceraldehyde 3-phosphate + L-glutamine = pyridoxal 5'-phosphate + L-glutamate + phosphate + 3 H2O + H(+). It functions in the pathway cofactor biosynthesis; pyridoxal 5'-phosphate biosynthesis. In terms of biological role, catalyzes the formation of pyridoxal 5'-phosphate from ribose 5-phosphate (RBP), glyceraldehyde 3-phosphate (G3P) and ammonia. The ammonia is provided by the PdxT subunit. Can also use ribulose 5-phosphate and dihydroxyacetone phosphate as substrates, resulting from enzyme-catalyzed isomerization of RBP and G3P, respectively. This Metallosphaera sedula (strain ATCC 51363 / DSM 5348 / JCM 9185 / NBRC 15509 / TH2) protein is Pyridoxal 5'-phosphate synthase subunit PdxS.